A 363-amino-acid chain; its full sequence is Galanin receptor 2a (363 aa).

The Extracellular portion of the chain corresponds to 1 to 23 (MNASQQIHVFSSHWKVESVIISL). A helical transmembrane segment spans residues 24-44 (IFSMIFLVGTVGNCLVLAVLI). Residues 45–54 (RNGQMNTKST) are Cytoplasmic-facing. A helical transmembrane segment spans residues 55-75 (NLFILNLGLADLCFIVFCVPL). Over 76–94 (QATIYTMDEWVFGAFVCKA) the chain is Extracellular. The cysteines at positions 92 and 169 are disulfide-linked. Residues 95–115 (VHFIIYLTMYASIFTLAAVSL) traverse the membrane as a helical segment. Residues 116–135 (DRYLAIRYPLRSRETRTPRN) are Cytoplasmic-facing. A helical transmembrane segment spans residues 136–156 (ALTSISLVWALSLFFSSPYLS). Over 157–179 (YYQQMDLDGTTVCIPAWSVHHRQ) the chain is Extracellular. The chain crosses the membrane as a helical span at residues 180–200 (AMDICTFIFGYLIPVLILGIT). Residues 201 to 230 (YARTIRYLWTSVDPMQDMSESRKAKRKVTK) lie on the Cytoplasmic side of the membrane. A helical transmembrane segment spans residues 231–251 (MIIIVAVLFCLCWLPHHLVIL). Over 252–268 (CMWFGHFPLNHTTYVLR) the chain is Extracellular. The chain crosses the membrane as a helical span at residues 269-289 (ILSHLVAYANSCLNPIVYALV). At 290 to 363 (SKHFRKGFKK…TSAFMTFNVT (74 aa)) the chain is on the cytoplasmic side.

It belongs to the G-protein coupled receptor 1 family. Expressed in neurons in the ventral area of the interpeduncular nucleus (IPN) where expression often overlaps with spx1.

It localises to the membrane. Its function is as follows. Receptor for the hormone galanin. Receptor for the hormones spexin-1 and spexin-2. This Danio rerio (Zebrafish) protein is Galanin receptor 2a.